The sequence spans 216 residues: MQFVLFGPPGAGKGTQAKFLSEELNVPHISTGDILRENVKKGTALGLKAKSYMDKGELVPDNLLIDLIKDRLSQPDCRKGFLLDGFPRTIPQAEALDEILDDINKKLDGVINIDVGSGELIRRLSGRRICRSCGASYHLVFNPPKAKDLCDSCGGELYQRDDDKEVAIKNRLDVYVRQTQPVLEYYKKKNLLIDIDGEKEIDEVTADVKAAIRKLA.

Residue 10–15 (GAGKGT) coordinates ATP. Positions 30 to 59 (STGDILRENVKKGTALGLKAKSYMDKGELV) are NMP. AMP-binding positions include T31, R36, 57–59 (ELV), 85–88 (GFPR), and Q92. The interval 126–163 (GRRICRSCGASYHLVFNPPKAKDLCDSCGGELYQRDDD) is LID. R127 provides a ligand contact to ATP. Zn(2+) is bound by residues C130 and C133. 136–137 (SY) lines the ATP pocket. 2 residues coordinate Zn(2+): C150 and C153. Positions 160 and 171 each coordinate AMP. An ATP-binding site is contributed by K199.

Belongs to the adenylate kinase family. Monomer.

The protein localises to the cytoplasm. It carries out the reaction AMP + ATP = 2 ADP. It functions in the pathway purine metabolism; AMP biosynthesis via salvage pathway; AMP from ADP: step 1/1. Catalyzes the reversible transfer of the terminal phosphate group between ATP and AMP. Plays an important role in cellular energy homeostasis and in adenine nucleotide metabolism. The chain is Adenylate kinase from Methanocella arvoryzae (strain DSM 22066 / NBRC 105507 / MRE50).